The sequence spans 146 residues: Large ribosomal subunit protein bL21 (146 aa).

A disordered region spans residues 115–146 (KSISLGKSAPKSSAKKETVKKETKPKSEKSTN). The span at 128–146 (AKKETVKKETKPKSEKSTN) shows a compositional bias: basic and acidic residues.

It belongs to the bacterial ribosomal protein bL21 family. Part of the 50S ribosomal subunit. Contacts protein L20.

In terms of biological role, this protein binds to 23S rRNA in the presence of protein L20. The sequence is that of Large ribosomal subunit protein bL21 from Prochlorococcus marinus (strain MIT 9312).